A 349-amino-acid polypeptide reads, in one-letter code: Magnesium-protoporphyrin IX monomethyl ester [oxidative] cyclase (349 aa).

It belongs to the AcsF family. Fe cation serves as cofactor.

It localises to the plastid. The protein localises to the chloroplast. The enzyme catalyses Mg-protoporphyrin IX 13-monomethyl ester + 3 NADPH + 3 O2 + 2 H(+) = 3,8-divinyl protochlorophyllide a + 3 NADP(+) + 5 H2O. It participates in porphyrin-containing compound metabolism; chlorophyll biosynthesis (light-independent). Catalyzes the formation of the isocyclic ring in chlorophyll biosynthesis. Mediates the cyclase reaction, which results in the formation of divinylprotochlorophyllide (Pchlide) characteristic of all chlorophylls from magnesium-protoporphyrin IX 13-monomethyl ester (MgPMME). The sequence is that of Magnesium-protoporphyrin IX monomethyl ester [oxidative] cyclase from Pyropia yezoensis (Susabi-nori).